The chain runs to 274 residues: Putative phosphoenolpyruvate synthase regulatory protein (274 aa).

Gly-157–Thr-164 contacts ADP.

It belongs to the pyruvate, phosphate/water dikinase regulatory protein family. PSRP subfamily.

The catalysed reaction is [pyruvate, water dikinase] + ADP = [pyruvate, water dikinase]-phosphate + AMP + H(+). The enzyme catalyses [pyruvate, water dikinase]-phosphate + phosphate + H(+) = [pyruvate, water dikinase] + diphosphate. In terms of biological role, bifunctional serine/threonine kinase and phosphorylase involved in the regulation of the phosphoenolpyruvate synthase (PEPS) by catalyzing its phosphorylation/dephosphorylation. This is Putative phosphoenolpyruvate synthase regulatory protein from Bordetella avium (strain 197N).